Here is a 346-residue protein sequence, read N- to C-terminus: Small ribosomal subunit biogenesis GTPase RsgA 1 (346 aa).

The CP-type G domain maps to 93–248 (EEQLIAANFD…IIDTPGMREF (156 aa)). GTP is bound by residues 138–141 (TKAD) and 190–198 (GSSGVGKSS). Residues cysteine 271, cysteine 276, histidine 278, and cysteine 284 each coordinate Zn(2+).

Belongs to the TRAFAC class YlqF/YawG GTPase family. RsgA subfamily. Monomer. Associates with 30S ribosomal subunit, binds 16S rRNA. Zn(2+) is required as a cofactor.

The protein resides in the cytoplasm. In terms of biological role, one of several proteins that assist in the late maturation steps of the functional core of the 30S ribosomal subunit. Helps release RbfA from mature subunits. May play a role in the assembly of ribosomal proteins into the subunit. Circularly permuted GTPase that catalyzes slow GTP hydrolysis, GTPase activity is stimulated by the 30S ribosomal subunit. The polypeptide is Small ribosomal subunit biogenesis GTPase RsgA 1 (Listeria innocua serovar 6a (strain ATCC BAA-680 / CLIP 11262)).